The chain runs to 323 residues: Cytosolic sulfotransferase 5 (323 aa).

Position 69–74 (69–74) interacts with 3'-phosphoadenylyl sulfate; it reads KCGTTW. His135 (proton acceptor) is an active-site residue. Residues Arg157, Ser165, and 289–291 contribute to the 3'-phosphoadenylyl sulfate site; that span reads RKG.

Belongs to the sulfotransferase 1 family. In terms of tissue distribution, expressed in inflorescence stems, roots and siliques.

The protein resides in the cytoplasm. Its function is as follows. Sulfotransferase that utilizes 3'-phospho-5'-adenylyl sulfate (PAPS) as sulfonate donor to specifically catalyze the sulfate conjugation of flavones and flavonols. Strictly specific for the position 7. Substrate preference is kaempferol 3-sulfate &gt; isorhamnetin &gt; kaempferol. This is Cytosolic sulfotransferase 5 (SOT5) from Arabidopsis thaliana (Mouse-ear cress).